The primary structure comprises 421 residues: MAFRGIRPSNKVAASRPDVWTLVNQATAECKVPPVSLSQGFFNYNPPKFVLDAAKKSIDEVACNQYSHTRGRPSLRKALSEAYSPYFKRTLNPDTEIVVTAGANEGFFSVFAAFLNPGDEVIVMEPFFDQYISNITMNGGVPVYVPIIPPEEGSVKPVSAGAWKLDMNKLRNAITEKTKMIVINTPHNPLGKIFSEEELNEIADLVLKHNLLVVSDEVYDRLSFVPFVRLATLRPELFKHVVTVGSGGKTFGCTGWRVGWLIGDESLIKYSAAAHTRICFAVNSPCQEALAIAFGEAEKHNYYEEYKSSYKKRFEILAKAFDQLEIPYTIPDGSYYTMANFSKLKLPKDYPFPEEIANRPRDFKLCYWILKEIGVATIPPTEFYTDEDAPVAENYLRFAFCKTFETLEEAARRLQKLKDYF.

Lys249 carries the N6-(pyridoxal phosphate)lysine modification.

It belongs to the class-I pyridoxal-phosphate-dependent aminotransferase family. The cofactor is pyridoxal 5'-phosphate.

It localises to the cytoplasm. This is an uncharacterized protein from Schizosaccharomyces pombe (strain 972 / ATCC 24843) (Fission yeast).